A 364-amino-acid chain; its full sequence is DNA polymerase IV (364 aa).

Residues 14-198 (IIHIDMDAFF…LPIEKFHGVG (185 aa)) form the UmuC domain. The Mg(2+) site is built by Asp-18 and Asp-116. Residue Glu-117 is part of the active site.

It belongs to the DNA polymerase type-Y family. Monomer. The cofactor is Mg(2+).

It localises to the cytoplasm. The catalysed reaction is DNA(n) + a 2'-deoxyribonucleoside 5'-triphosphate = DNA(n+1) + diphosphate. Its function is as follows. Poorly processive, error-prone DNA polymerase involved in untargeted mutagenesis. Copies undamaged DNA at stalled replication forks, which arise in vivo from mismatched or misaligned primer ends. These misaligned primers can be extended by PolIV. Exhibits no 3'-5' exonuclease (proofreading) activity. May be involved in translesional synthesis, in conjunction with the beta clamp from PolIII. The chain is DNA polymerase IV from Streptococcus pyogenes serotype M1.